A 121-amino-acid chain; its full sequence is Type II secretion system protein I (121 aa).

Residues 1–6 (MRRQKG) constitute a propeptide, leader sequence. Methionine 7 is subject to N-methylmethionine. The chain crosses the membrane as a helical span at residues 7–27 (MTLVEVLVALSVFALAGIAVL).

The protein belongs to the GSP I family. In terms of assembly, type II secretion is composed of four main components: the outer membrane complex, the inner membrane complex, the cytoplasmic secretion ATPase and the periplasm-spanning pseudopilus. Interacts with core component OutG. Post-translationally, cleaved by prepilin peptidase. In terms of processing, methylated by prepilin peptidase at the amino group of the N-terminal methionine once the leader sequence is cleaved by prepilin peptidase.

The protein localises to the cell inner membrane. In terms of biological role, component of the type II secretion system required for the energy-dependent secretion of extracellular factors such as proteases and toxins from the periplasm. Part of the pseudopilus tip complex that is critical for the recognition and binding of secretion substrates. The chain is Type II secretion system protein I (outI) from Pectobacterium carotovorum subsp. carotovorum (Erwinia carotovora subsp. carotovora).